Here is an 87-residue protein sequence, read N- to C-terminus: Small ribosomal subunit protein uS17 (87 aa).

Belongs to the universal ribosomal protein uS17 family. In terms of assembly, part of the 30S ribosomal subunit.

One of the primary rRNA binding proteins, it binds specifically to the 5'-end of 16S ribosomal RNA. The polypeptide is Small ribosomal subunit protein uS17 (Bacillus licheniformis (strain ATCC 14580 / DSM 13 / JCM 2505 / CCUG 7422 / NBRC 12200 / NCIMB 9375 / NCTC 10341 / NRRL NRS-1264 / Gibson 46)).